Here is a 412-residue protein sequence, read N- to C-terminus: Putative competence-damage inducible protein (412 aa).

It belongs to the CinA family.

The protein is Putative competence-damage inducible protein of Clostridium perfringens (strain SM101 / Type A).